A 172-amino-acid chain; its full sequence is Lipoprotein signal peptidase (172 aa).

Helical transmembrane passes span Leu10–Val30, Trp68–Leu88, and Ser98–Met118. Catalysis depends on residues Asp124 and Asp142. Residues Phe138 to Phe158 traverse the membrane as a helical segment.

This sequence belongs to the peptidase A8 family.

Its subcellular location is the cell inner membrane. It carries out the reaction Release of signal peptides from bacterial membrane prolipoproteins. Hydrolyzes -Xaa-Yaa-Zaa-|-(S,diacylglyceryl)Cys-, in which Xaa is hydrophobic (preferably Leu), and Yaa (Ala or Ser) and Zaa (Gly or Ala) have small, neutral side chains.. Its pathway is protein modification; lipoprotein biosynthesis (signal peptide cleavage). Its function is as follows. This protein specifically catalyzes the removal of signal peptides from prolipoproteins. This chain is Lipoprotein signal peptidase, found in Xanthomonas axonopodis pv. citri (strain 306).